The primary structure comprises 309 residues: Ribosomal RNA small subunit methyltransferase H (309 aa).

S-adenosyl-L-methionine contacts are provided by residues alanine 36 to histidine 38, aspartate 55, phenylalanine 81, aspartate 102, and glutamine 109.

This sequence belongs to the methyltransferase superfamily. RsmH family.

The protein resides in the cytoplasm. It catalyses the reaction cytidine(1402) in 16S rRNA + S-adenosyl-L-methionine = N(4)-methylcytidine(1402) in 16S rRNA + S-adenosyl-L-homocysteine + H(+). Functionally, specifically methylates the N4 position of cytidine in position 1402 (C1402) of 16S rRNA. This chain is Ribosomal RNA small subunit methyltransferase H, found in Mycoplasma genitalium (strain ATCC 33530 / DSM 19775 / NCTC 10195 / G37) (Mycoplasmoides genitalium).